We begin with the raw amino-acid sequence, 144 residues long: Putative pre-16S rRNA nuclease (144 aa).

This sequence belongs to the YqgF nuclease family.

It localises to the cytoplasm. Functionally, could be a nuclease involved in processing of the 5'-end of pre-16S rRNA. In Acaryochloris marina (strain MBIC 11017), this protein is Putative pre-16S rRNA nuclease.